Here is a 199-residue protein sequence, read N- to C-terminus: Charged multivesicular body protein 1b (199 aa).

Positions 26 to 48 form a coiled coil; sequence DKEEKAEKAKIKKAIQKGNMEVA. The interval 132 to 156 is interaction with IST1; sequence MEDTMSSTTTLTTPQNQVDMLLQEM. Residues 167 to 199 are disordered; that stretch reads ELPQGQTGSVGTSVASAEQDELSQRLARLRDQV. Over residues 170-182 the composition is skewed to polar residues; it reads QGQTGSVGTSVAS. The tract at residues 174–199 is interaction with SPAST; sequence GSVGTSVASAEQDELSQRLARLRDQV. Positions 178 to 199 form a coiled coil; sequence TSVASAEQDELSQRLARLRDQV. The interval 180–196 is interaction with VPS4A, MITD1 and STAMBP; sequence VASAEQDELSQRLARLR. The tract at residues 180–199 is interaction with VTA1; that stretch reads VASAEQDELSQRLARLRDQV. The tract at residues 183-199 is interaction with VPS4B; it reads AEQDELSQRLARLRDQV. The short motif at 186 to 196 is the MIT-interacting motif element; sequence DELSQRLARLR.

This sequence belongs to the SNF7 family. As to quaternary structure, probable peripherally associated component of the endosomal sorting required for transport complex III (ESCRT-III). ESCRT-III components are thought to multimerize to form a flat lattice on the perimeter membrane of the endosome. Several assembly forms of ESCRT-III may exist that interact and act sequentially. Interacts with CHMP1A. Interacts with VTA1; the interaction probably involves the open conformation of CHMP1B. Interacts with CHMP2A. Interacts with VPS4A; the interaction is direct. Interacts with VPS4B; the interaction is direct. Interacts with SPAST (via MIT domain); the interaction is direct. Interacts with IST1. Interacts with MITD1. Interacts with STAMBP. As to expression, widely expressed. Expressed in pancreas, kidney, skeletal muscle, liver, lung, placenta and brain.

It is found in the cytoplasm. The protein resides in the cytosol. The protein localises to the endosome. It localises to the late endosome membrane. Probable peripherally associated component of the endosomal sorting required for transport complex III (ESCRT-III) which is involved in multivesicular bodies (MVBs) formation and sorting of endosomal cargo proteins into MVBs. MVBs contain intraluminal vesicles (ILVs) that are generated by invagination and scission from the limiting membrane of the endosome and mostly are delivered to lysosomes enabling degradation of membrane proteins, such as stimulated growth factor receptors, lysosomal enzymes and lipids. The MVB pathway appears to require the sequential function of ESCRT-O, -I,-II and -III complexes. ESCRT-III proteins mostly dissociate from the invaginating membrane before the ILV is released. The ESCRT machinery also functions in topologically equivalent membrane fission events, such as the terminal stages of cytokinesis and the budding of enveloped viruses (HIV-1 and other lentiviruses). ESCRT-III proteins are believed to mediate the necessary vesicle extrusion and/or membrane fission activities, possibly in conjunction with the AAA ATPase VPS4. Involved in cytokinesis. Involved in recruiting VPS4A and/or VPS4B and SPAST to the midbody of dividing cells. Involved in HIV-1 p6- and p9-dependent virus release. In Homo sapiens (Human), this protein is Charged multivesicular body protein 1b (CHMP1B).